A 126-amino-acid polypeptide reads, in one-letter code: MAAEEATLTVRLIRSFEHRNFKPVVYHGVNLHQTVKEFIIFLKQDVPLRTSLPPPLRNYKYDTLKILHQAHKAKTNELVLGLEDDDTLLLKEDRTLKDSGVASETEIAFFCGEDYKRYKANPISSW.

This sequence belongs to the UPF0538 family.

The sequence is that of UPF0538 protein C2orf76 homolog from Mus musculus (Mouse).